A 177-amino-acid polypeptide reads, in one-letter code: Large ribosomal subunit protein uL6 (177 aa).

Belongs to the universal ribosomal protein uL6 family. Part of the 50S ribosomal subunit.

This protein binds to the 23S rRNA, and is important in its secondary structure. It is located near the subunit interface in the base of the L7/L12 stalk, and near the tRNA binding site of the peptidyltransferase center. The polypeptide is Large ribosomal subunit protein uL6 (Cereibacter sphaeroides (strain ATCC 17025 / ATH 2.4.3) (Rhodobacter sphaeroides)).